The chain runs to 477 residues: Transmembrane and coiled-coil domain protein 3 (477 aa).

The segment at Met1–Lys24 is disordered. Ser46 is modified (phosphoserine). Coiled-coil stretches lie at residues Lys63–Lys83 and Lys112–Thr149. Residues Ala234–Thr280 form a disordered region. Ser253 is subject to Phosphoserine. Polar residues predominate over residues Ser258–Thr280. Residues Gln284 to Gln398 are a coiled coil. The next 2 helical transmembrane spans lie at Val409 to Val429 and Phe450 to Ile470.

This sequence belongs to the TEX28 family. May form homodimers and heterodimers with TMCC2 or TMCC3 via the coiled-coil domains. Interacts with ribosomal proteins RPL4 and RPS6.

It is found in the endoplasmic reticulum membrane. The polypeptide is Transmembrane and coiled-coil domain protein 3 (Mus musculus (Mouse)).